The chain runs to 474 residues: Photosystem II CP43 reaction center protein (474 aa).

Residues 1–14 (MKTLYSLRRFYPVE) constitute a propeptide that is removed on maturation. T15 bears the N-acetylthreonine mark. Position 15 is a phosphothreonine (T15). The next 5 helical transmembrane spans lie at 69–93 (LFEV…PHLA), 134–155 (LLGP…KDRN), 178–201 (KALY…RKIT), 256–276 (KPFA…LSYS), and 292–313 (WFNN…ASQA). E368 serves as a coordination point for [CaMn4O5] cluster. Residues 448–472 (RARAAAAGFEKGIDRDFEPVLSMTP) traverse the membrane as a helical segment.

It belongs to the PsbB/PsbC family. PsbC subfamily. PSII is composed of 1 copy each of membrane proteins PsbA, PsbB, PsbC, PsbD, PsbE, PsbF, PsbH, PsbI, PsbJ, PsbK, PsbL, PsbM, PsbT, PsbX, PsbY, PsbZ, Psb30/Ycf12, at least 3 peripheral proteins of the oxygen-evolving complex and a large number of cofactors. It forms dimeric complexes. The cofactor is Binds multiple chlorophylls and provides some of the ligands for the Ca-4Mn-5O cluster of the oxygen-evolving complex. It may also provide a ligand for a Cl- that is required for oxygen evolution. PSII binds additional chlorophylls, carotenoids and specific lipids..

It localises to the plastid. It is found in the chloroplast thylakoid membrane. Its function is as follows. One of the components of the core complex of photosystem II (PSII). It binds chlorophyll and helps catalyze the primary light-induced photochemical processes of PSII. PSII is a light-driven water:plastoquinone oxidoreductase, using light energy to abstract electrons from H(2)O, generating O(2) and a proton gradient subsequently used for ATP formation. The chain is Photosystem II CP43 reaction center protein from Citrus sinensis (Sweet orange).